Reading from the N-terminus, the 173-residue chain is Large ribosomal subunit protein uL10 (173 aa).

This sequence belongs to the universal ribosomal protein uL10 family. Part of the ribosomal stalk of the 50S ribosomal subunit. The N-terminus interacts with L11 and the large rRNA to form the base of the stalk. The C-terminus forms an elongated spine to which L12 dimers bind in a sequential fashion forming a multimeric L10(L12)X complex.

In terms of biological role, forms part of the ribosomal stalk, playing a central role in the interaction of the ribosome with GTP-bound translation factors. The protein is Large ribosomal subunit protein uL10 of Desulfatibacillum aliphaticivorans.